Consider the following 624-residue polypeptide: Serine/threonine-protein kinase ppk35 (624 aa).

The region spanning 162 to 465 is the Protein kinase domain; it reads FDLLVKLGQG…TIEIQKHPFF (304 aa). Residues 168–176 and lysine 191 each bind ATP; that span reads LGQGGYGSV. The active-site Proton acceptor is aspartate 285. One can recognise an AGC-kinase C-terminal domain in the interval 466 to 548; the sequence is KRLHWNGLRK…KYRPNARKPL (83 aa). Positions 545–559 are enriched in basic residues; sequence RKPLVGRHREKRQLR. Positions 545–617 are disordered; it reads RKPLVGRHRE…VHRLLERKGK (73 aa). A compositionally biased stretch (basic and acidic residues) spans 560–574; the sequence is KEKPEKKNNSTKQKD. Residues 596-609 show a composition bias toward basic residues; sequence SKTKGHKTKSSRVH.

The protein belongs to the protein kinase superfamily. Ser/Thr protein kinase family.

It is found in the cytoplasm. The protein localises to the nucleus. It localises to the nucleolus. The enzyme catalyses L-seryl-[protein] + ATP = O-phospho-L-seryl-[protein] + ADP + H(+). The catalysed reaction is L-threonyl-[protein] + ATP = O-phospho-L-threonyl-[protein] + ADP + H(+). Functionally, has a role in meiosis. This Schizosaccharomyces pombe (strain 972 / ATCC 24843) (Fission yeast) protein is Serine/threonine-protein kinase ppk35 (ppk35).